We begin with the raw amino-acid sequence, 769 residues long: Endothelin-converting enzyme 1 (769 aa).

The Cytoplasmic portion of the chain corresponds to 1–67; that stretch reads MRTVWSPLAA…WAARTSVEKR (67 aa). Threonine 24 carries the post-translational modification Phosphothreonine. Residues 68 to 88 traverse the membrane as a helical; Signal-anchor for type II membrane protein segment; it reads LVVLVTLLAAGLVACLAALGI. Topologically, residues 89–769 are extracellular; that stretch reads QYQTRTPPVC…MNPHHKCEVW (681 aa). One can recognise a Peptidase M13 domain in the interval 97-769; the sequence is VCLTEACVSV…MNPHHKCEVW (673 aa). Cystine bridges form between cysteine 98-cysteine 103, cysteine 121-cysteine 754, cysteine 129-cysteine 714, cysteine 184-cysteine 434, and cysteine 643-cysteine 766. Asparagine 165, asparagine 186, asparagine 209, asparagine 269, asparagine 315, asparagine 361, asparagine 382, and asparagine 538 each carry an N-linked (GlcNAc...) asparagine glycan. Histidine 606 contacts Zn(2+). Glutamate 607 is an active-site residue. Histidine 610 contacts Zn(2+). N-linked (GlcNAc...) asparagine glycosylation is found at asparagine 631 and asparagine 650. Glutamate 666 serves as a coordination point for Zn(2+). The Proton donor role is filled by aspartate 670.

It belongs to the peptidase M13 family. In terms of assembly, homodimer; disulfide-linked. Interacts with PPP1R16B. Interacts with TSPAN8; this interaction recruits the endothelin converting enzyme ECE1 to tetraspanin-enriched microdomains and positively modulates its enzymatic activity. Zn(2+) is required as a cofactor.

It localises to the cell membrane. It catalyses the reaction Hydrolysis of the 21-Trp-|-Val-22 bond in big endothelin to form endothelin 1.. Its activity is regulated as follows. Inhibited by phosphoramidon. Converts big endothelin-1 to endothelin-1. In Mus musculus (Mouse), this protein is Endothelin-converting enzyme 1 (Ece1).